Consider the following 242-residue polypeptide: uncharacterized protein (242 aa).

A signal peptide spans 1-17; the sequence is MKFSPAYLLAFAPIVAA. N-linked (GlcNAc...) asparagine glycans are attached at residues Asn47, Asn86, Asn122, Asn159, and Asn178. The interval 176–214 is disordered; the sequence is NANESTADGQAQSGSSGSSSDSGSHSGHSSATQTSSTTA. Residues 180–214 are compositionally biased toward low complexity; the sequence is STADGQAQSGSSGSSSDSGSHSGHSSATQTSSTTA. A lipid anchor (GPI-like-anchor amidated alanine) is attached at Ala218. Positions 219 to 242 are cleaved as a propeptide — removed in mature form; sequence GAVALETAAWGILGAAVVGGLAVL.

The GPI-like anchor contains a phosphoceramide lipid group. The anchor position has not been determined.

Its subcellular location is the cell membrane. This is an uncharacterized protein from Aspergillus fumigatus (strain ATCC MYA-4609 / CBS 101355 / FGSC A1100 / Af293) (Neosartorya fumigata).